The chain runs to 446 residues: Argininosuccinate synthase (446 aa).

ATP is bound by residues 17-25 (AFSGGLDTS) and Ala-43. Tyr-99 is an L-citrulline binding site. ATP contacts are provided by Gly-129 and Thr-131. Positions 131, 135, and 136 each coordinate L-aspartate. An L-citrulline-binding site is contributed by Asn-135. Asp-136 contacts ATP. L-citrulline contacts are provided by Arg-139 and Ser-192. Asp-194 lines the ATP pocket. L-citrulline contacts are provided by Thr-201, Glu-203, and Glu-280.

It belongs to the argininosuccinate synthase family. Type 2 subfamily. Homotetramer.

Its subcellular location is the cytoplasm. The catalysed reaction is L-citrulline + L-aspartate + ATP = 2-(N(omega)-L-arginino)succinate + AMP + diphosphate + H(+). The protein operates within amino-acid biosynthesis; L-arginine biosynthesis; L-arginine from L-ornithine and carbamoyl phosphate: step 2/3. The sequence is that of Argininosuccinate synthase from Burkholderia mallei (strain NCTC 10247).